The sequence spans 110 residues: WGEQEASILVPGDIVSIKLGDIVPADARIDQSGLTGESLPVTKNPGDEVFSGSTCKTGTLTLNKGIVGMTGDGVNDAPALKTLHGLQAPESTSLNLPNDKELSEIAEQAK.

Asp-72 and Asp-76 together coordinate Mg(2+). The tract at residues 88-110 (APESTSLNLPNDKELSEIAEQAK) is disordered. Residues 98-110 (NDKELSEIAEQAK) show a composition bias toward basic and acidic residues.

The protein belongs to the cation transport ATPase (P-type) (TC 3.A.3) family. Type IIIA subfamily. In terms of processing, the N-terminus is blocked.

It localises to the cell membrane. It catalyses the reaction ATP + H2O + H(+)(in) = ADP + phosphate + 2 H(+)(out). The plasma membrane ATPase of plants and fungi is a hydrogen ion pump. The proton gradient it generates drives the active transport of nutrients by H(+)-symport. The resulting external acidification and/or internal alkinization may mediate growth responses. The polypeptide is Plasma membrane ATPase (Avena sativa (Oat)).